The sequence spans 113 residues: Gonadotropin subunit beta (113 aa).

6 disulfides stabilise this stretch: cysteine 6–cysteine 54, cysteine 20–cysteine 69, cysteine 23–cysteine 107, cysteine 31–cysteine 85, cysteine 35–cysteine 87, and cysteine 90–cysteine 97. Asparagine 10 carries N-linked (GlcNAc...) asparagine glycosylation.

The protein belongs to the glycoprotein hormones subunit beta family. In terms of assembly, heterodimer of an alpha and a beta chain.

The protein resides in the secreted. Functionally, involved in gametogenesis and steroidogenesis. This Muraenesox cinereus (Daggertooth pike conger) protein is Gonadotropin subunit beta (cgb).